We begin with the raw amino-acid sequence, 298 residues long: Urease accessory protein UreD (298 aa).

The protein belongs to the UreD family. In terms of assembly, ureD, UreF and UreG form a complex that acts as a GTP-hydrolysis-dependent molecular chaperone, activating the urease apoprotein by helping to assemble the nickel containing metallocenter of UreC. The UreE protein probably delivers the nickel.

It is found in the cytoplasm. Functionally, required for maturation of urease via the functional incorporation of the urease nickel metallocenter. The sequence is that of Urease accessory protein UreD from Frankia alni (strain DSM 45986 / CECT 9034 / ACN14a).